The primary structure comprises 132 residues: Small ribosomal subunit protein uS8 (132 aa).

The protein belongs to the universal ribosomal protein uS8 family. In terms of assembly, part of the 30S ribosomal subunit. Contacts proteins S5 and S12.

One of the primary rRNA binding proteins, it binds directly to 16S rRNA central domain where it helps coordinate assembly of the platform of the 30S subunit. This chain is Small ribosomal subunit protein uS8, found in Clostridium kluyveri (strain NBRC 12016).